A 445-amino-acid polypeptide reads, in one-letter code: Argininosuccinate synthase (445 aa).

Residues alanine 17–serine 25 and alanine 43 contribute to the ATP site. Tyrosine 99 is an L-citrulline binding site. The ATP site is built by glycine 129 and threonine 131. Threonine 131, asparagine 135, and aspartate 136 together coordinate L-aspartate. Residue asparagine 135 coordinates L-citrulline. Aspartate 136 serves as a coordination point for ATP. Residues arginine 139 and serine 192 each coordinate L-citrulline. An ATP-binding site is contributed by aspartate 194. Residues threonine 201, glutamate 203, and glutamate 280 each contribute to the L-citrulline site.

This sequence belongs to the argininosuccinate synthase family. Type 2 subfamily. In terms of assembly, homotetramer.

The protein resides in the cytoplasm. It carries out the reaction L-citrulline + L-aspartate + ATP = 2-(N(omega)-L-arginino)succinate + AMP + diphosphate + H(+). It functions in the pathway amino-acid biosynthesis; L-arginine biosynthesis; L-arginine from L-ornithine and carbamoyl phosphate: step 2/3. The protein is Argininosuccinate synthase of Gemmatimonas aurantiaca (strain DSM 14586 / JCM 11422 / NBRC 100505 / T-27).